A 279-amino-acid chain; its full sequence is Fatty-acid-binding protein 1 (279 aa).

Residues R103, Y116, and S183 each coordinate dodecanoate.

This sequence belongs to the chalcone isomerase family. Expressed in developing cotyledons, young seedlings, roots, seeds, embryos, macrospores, preanthesis and tapetum. Restricted to developing and reproductive tissues.

The protein localises to the plastid. It is found in the chloroplast stroma. In terms of biological role, fatty-acid-binding protein. Interacts preferentially with saturated fatty acid. May be involved in alpha-linolenic (C18:3) metabolism. The sequence is that of Fatty-acid-binding protein 1 (FAP1) from Arabidopsis thaliana (Mouse-ear cress).